The sequence spans 258 residues: 2-oxo-tetronate isomerase (258 aa).

The active-site Proton donor/acceptor is the glutamate 143. The Mg(2+) site is built by glutamate 143, aspartate 178, glutamine 204, and glutamate 240. Catalysis depends on glutamate 240, which acts as the Proton donor/acceptor.

This sequence belongs to the hyi family. OtnI subfamily.

It carries out the reaction 2-dehydro-L-erythronate = 3-dehydro-L-erythronate. It catalyses the reaction 2-dehydro-D-erythronate = 3-dehydro-D-erythronate. Functionally, catalyzes the isomerization of 2-oxo-tetronate to 3-oxo-tetronate. This chain is 2-oxo-tetronate isomerase, found in Haemophilus influenzae (strain ATCC 51907 / DSM 11121 / KW20 / Rd).